A 189-amino-acid chain; its full sequence is Elongation factor P (189 aa).

Belongs to the elongation factor P family.

The protein resides in the cytoplasm. It participates in protein biosynthesis; polypeptide chain elongation. In terms of biological role, involved in peptide bond synthesis. Stimulates efficient translation and peptide-bond synthesis on native or reconstituted 70S ribosomes in vitro. Probably functions indirectly by altering the affinity of the ribosome for aminoacyl-tRNA, thus increasing their reactivity as acceptors for peptidyl transferase. This Orientia tsutsugamushi (strain Boryong) (Rickettsia tsutsugamushi) protein is Elongation factor P.